The following is a 941-amino-acid chain: Heat shock protein 70 homolog (941 aa).

The segment at 851-887 is disordered; that stretch reads ENQPDIPEDSEDSESEDDTTTSKDSESSEITENLALP. Positions 856 to 869 are enriched in acidic residues; sequence IPEDSEDSESEDDT.

Belongs to the heat shock protein 70 family.

Functionally, probable chaperone. The chain is Heat shock protein 70 homolog from Acanthamoeba polyphaga (Amoeba).